The following is a 54-amino-acid chain: Ferredoxin (54 aa).

4Fe-4S ferredoxin-type domains are found at residues 2-25 and 26-54; these read YVINDSCIACGACKPECPVNIQQG and SIYAIDADSCIDCGSCASVCPVGAPNPED. 8 residues coordinate [4Fe-4S] cluster: Cys8, Cys11, Cys14, Cys18, Cys35, Cys38, Cys41, and Cys45.

The cofactor is [4Fe-4S] cluster.

Its function is as follows. Ferredoxins are iron-sulfur proteins that transfer electrons in a wide variety of metabolic reactions. The protein is Ferredoxin of Peptoniphilus asaccharolyticus (Peptostreptococcus asaccharolyticus).